The sequence spans 424 residues: Histidine--tRNA ligase (424 aa).

It belongs to the class-II aminoacyl-tRNA synthetase family. As to quaternary structure, homodimer.

The protein resides in the cytoplasm. The catalysed reaction is tRNA(His) + L-histidine + ATP = L-histidyl-tRNA(His) + AMP + diphosphate + H(+). The protein is Histidine--tRNA ligase of Salmonella arizonae (strain ATCC BAA-731 / CDC346-86 / RSK2980).